A 357-amino-acid polypeptide reads, in one-letter code: Deoxyuridylate hydroxymethyltransferase (357 aa).

Belongs to the thymidylate synthase family.

The catalysed reaction is dUMP + (6R)-5,10-methylene-5,6,7,8-tetrahydrofolate + H2O = 5-hydroxymethyl-dUMP + (6S)-5,6,7,8-tetrahydrofolate. Functionally, catalyzes formation of 5-hydroxymethyldeoxyuridylate (5HMdUMP) as a step in the pathway that replaces dTMP by thymidine hypermodifications in the viral genome. As a final result of the pathway of hypermodification, 5-Nalpha-putrescinylthymidine (Nalpha-PutT) substitutes for about 50% of thymidines in the viral DNA. These modifications probably prevent degradation of viral genome by the host restriction-modification antiviral defense system. The sequence is that of Deoxyuridylate hydroxymethyltransferase from Delftia acidovorans (Pseudomonas acidovorans).